We begin with the raw amino-acid sequence, 466 residues long: Glutamate--tRNA ligase 2 (466 aa).

The 'HIGH' region signature appears at 9 to 19 (PSPTGYLHVGG). The short motif at 234–238 (PLSKR) is the 'KMSKS' region element. K237 lines the ATP pocket.

Belongs to the class-I aminoacyl-tRNA synthetase family. Glutamate--tRNA ligase type 1 subfamily. Monomer.

The protein resides in the cytoplasm. The catalysed reaction is tRNA(Glu) + L-glutamate + ATP = L-glutamyl-tRNA(Glu) + AMP + diphosphate. Catalyzes the attachment of glutamate to tRNA(Glu) in a two-step reaction: glutamate is first activated by ATP to form Glu-AMP and then transferred to the acceptor end of tRNA(Glu). In Pseudothermotoga lettingae (strain ATCC BAA-301 / DSM 14385 / NBRC 107922 / TMO) (Thermotoga lettingae), this protein is Glutamate--tRNA ligase 2.